Here is a 279-residue protein sequence, read N- to C-terminus: 4-deoxy-L-threo-5-hexosulose-uronate ketol-isomerase (279 aa).

Zn(2+)-binding residues include His197, His199, Glu204, and His246.

This sequence belongs to the KduI family. The cofactor is Zn(2+).

The catalysed reaction is 5-dehydro-4-deoxy-D-glucuronate = 3-deoxy-D-glycero-2,5-hexodiulosonate. The protein operates within glycan metabolism; pectin degradation; 2-dehydro-3-deoxy-D-gluconate from pectin: step 4/5. Its function is as follows. Catalyzes the isomerization of 5-dehydro-4-deoxy-D-glucuronate to 3-deoxy-D-glycero-2,5-hexodiulosonate. The polypeptide is 4-deoxy-L-threo-5-hexosulose-uronate ketol-isomerase (Kineococcus radiotolerans (strain ATCC BAA-149 / DSM 14245 / SRS30216)).